The primary structure comprises 104 residues: ATP synthase subunit c (104 aa).

2 helical membrane-spanning segments follow: residues 31–51 (SMIA…IGMG) and 75–95 (MFIA…IALI).

Belongs to the ATPase C chain family. F-type ATPases have 2 components, F(1) - the catalytic core - and F(0) - the membrane proton channel. F(1) has five subunits: alpha(3), beta(3), gamma(1), delta(1), epsilon(1). F(0) has three main subunits: a(1), b(2) and c(10-14). The alpha and beta chains form an alternating ring which encloses part of the gamma chain. F(1) is attached to F(0) by a central stalk formed by the gamma and epsilon chains, while a peripheral stalk is formed by the delta and b chains.

Its subcellular location is the cell inner membrane. Its function is as follows. F(1)F(0) ATP synthase produces ATP from ADP in the presence of a proton or sodium gradient. F-type ATPases consist of two structural domains, F(1) containing the extramembraneous catalytic core and F(0) containing the membrane proton channel, linked together by a central stalk and a peripheral stalk. During catalysis, ATP synthesis in the catalytic domain of F(1) is coupled via a rotary mechanism of the central stalk subunits to proton translocation. Key component of the F(0) channel; it plays a direct role in translocation across the membrane. A homomeric c-ring of between 10-14 subunits forms the central stalk rotor element with the F(1) delta and epsilon subunits. The chain is ATP synthase subunit c from Sulfurimonas denitrificans (strain ATCC 33889 / DSM 1251) (Thiomicrospira denitrificans (strain ATCC 33889 / DSM 1251)).